We begin with the raw amino-acid sequence, 89 residues long: Small ribosomal subunit protein uS15 (89 aa).

The protein belongs to the universal ribosomal protein uS15 family. In terms of assembly, part of the 30S ribosomal subunit. Forms a bridge to the 50S subunit in the 70S ribosome, contacting the 23S rRNA.

One of the primary rRNA binding proteins, it binds directly to 16S rRNA where it helps nucleate assembly of the platform of the 30S subunit by binding and bridging several RNA helices of the 16S rRNA. Functionally, forms an intersubunit bridge (bridge B4) with the 23S rRNA of the 50S subunit in the ribosome. This chain is Small ribosomal subunit protein uS15, found in Syntrophobacter fumaroxidans (strain DSM 10017 / MPOB).